We begin with the raw amino-acid sequence, 199 residues long: Ribonuclease HII (199 aa).

The RNase H type-2 domain maps to 14–199 (GLLAGVDEAG…SFAPVAEVLR (186 aa)). D20, E21, and D112 together coordinate a divalent metal cation.

It belongs to the RNase HII family. It depends on Mn(2+) as a cofactor. Requires Mg(2+) as cofactor.

The protein localises to the cytoplasm. The catalysed reaction is Endonucleolytic cleavage to 5'-phosphomonoester.. Endonuclease that specifically degrades the RNA of RNA-DNA hybrids. The chain is Ribonuclease HII from Polaromonas sp. (strain JS666 / ATCC BAA-500).